Reading from the N-terminus, the 199-residue chain is Chaperone protein TorD (199 aa).

The protein belongs to the TorD/DmsD family. TorD subfamily.

It is found in the cytoplasm. Its function is as follows. Involved in the biogenesis of TorA. Acts on TorA before the insertion of the molybdenum cofactor and, as a result, probably favors a conformation of the apoenzyme that is competent for acquiring the cofactor. The sequence is that of Chaperone protein TorD from Escherichia coli O45:K1 (strain S88 / ExPEC).